A 109-amino-acid chain; its full sequence is Acylphosphatase (109 aa).

Residues 22–109 (RLRARVEGVV…GEFSSFDVVY (88 aa)) form the Acylphosphatase-like domain. Residues Arg-37 and Asn-55 contribute to the active site.

This sequence belongs to the acylphosphatase family.

The enzyme catalyses an acyl phosphate + H2O = a carboxylate + phosphate + H(+). The protein is Acylphosphatase (acyP) of Arthrobacter sp. (strain FB24).